The primary structure comprises 60 residues: Mastoparan (60 aa).

The N-terminal stretch at 1–27 is a signal peptide; sequence MKDTILILFTAFIALLGFFGMSAEALA. AXPX repeat units follow at residues 27 to 30, 31 to 34, 35 to 38, and 41 to 44; these read ADPL, ADPS, AGPN, and ADPE. A propeptide spanning residues 28–45 is cleaved from the precursor; that stretch reads DPLADPSAGPNAEADPEA. Leu-59 carries the post-translational modification Leucine amide.

It belongs to the MCD family. Mastoparan subfamily. As to expression, expressed by the venom gland.

It is found in the secreted. It localises to the target cell membrane. Functionally, mast cell degranulating peptide. Its mast cell degranulation activity may be related to the activation of G-protein coupled receptors in mast cells as well as interaction with other proteins located in cell endosomal membranes in the mast cells. Has a membranolytic activity on human glioblastoma multiforme cells (brain tumor cells) that leads to cell necrosis. In Vespa orientalis (Oriental hornet), this protein is Mastoparan.